The sequence spans 428 residues: MPRPGKSSYSDQKPPYSYISLTAMAIQHSAEKMLPLSDIYKFIMERFPYYREHTQRWQNSLRHNLSFNDCFIKIPRRPDQPGKGSFWALHPDCGDMFENGSFLRRRKRFKVLRADHAHLHSGSSKGAPGTGPGGHLHPHHPHHAHHHHHHHHHAAHHHHHHHPPQPPPPPPPHMVPYFHQQPAPAPQPPHLPSQPAQQPQPQSQPPQTSHPGKMQEAAAVAAAAAAAAAAAVGSVGRLSQFPPYGLGSAAAAAAAAAASTTGFKHPFAIENIIGRDYKGVLQAGGLPLASVMHHLGYPVPGQLSNVVGSVWPHVGVMDSVAAAAAAAAAAGVPVGPEYGAFGVPVKALCHSANQSLPAVPVPIKPTPALPPVTTLPPALSVPTASQQLPAPSTVCAAAASPTAPLLEPTAAGRADSKGSSLHSVLVHS.

The fork-head DNA-binding region spans 12–103 (QKPPYSYISL…GDMFENGSFL (92 aa)). 2 disordered regions span residues 118-217 (HLHS…MQEA) and 408-428 (PTAA…LVHS). A compositionally biased stretch (basic residues) spans 136 to 163 (LHPHHPHHAHHHHHHHHHAAHHHHHHHP). Pro residues-rich tracts occupy residues 164–174 (PQPPPPPPPHM) and 183–192 (APAPQPPHLP). Low complexity predominate over residues 193–217 (SQPAQQPQPQSQPPQTSHPGKMQEA).

The protein resides in the nucleus. Functionally, transcription factor. The protein is Forkhead box protein B2 (Foxb2) of Mus musculus (Mouse).